A 74-amino-acid polypeptide reads, in one-letter code: Guanine nucleotide-binding protein G(T) subunit gamma-T1 (74 aa).

Cysteine 71 is subject to Cysteine methyl ester. The S-farnesyl cysteine moiety is linked to residue cysteine 71. Positions 72–74 (VIS) are cleaved as a propeptide — removed in mature form.

Belongs to the G protein gamma family. G proteins are composed of 3 units, alpha, beta and gamma. In terms of tissue distribution, retinal rod outer segment.

The protein localises to the cell membrane. Functionally, guanine nucleotide-binding proteins (G proteins) are involved as a modulator or transducer in various transmembrane signaling systems. The beta and gamma chains are required for the GTPase activity, for replacement of GDP by GTP, and for G protein-effector interaction. The polypeptide is Guanine nucleotide-binding protein G(T) subunit gamma-T1 (Gngt1) (Mus musculus (Mouse)).